A 437-amino-acid chain; its full sequence is Transcription factor ets-4 (437 aa).

A disordered region spans residues 1–30 (MNGTGSVGHRWNSLSPEPHSGTESTASTPF). Positions 21 to 30 (GTESTASTPF) are enriched in polar residues. Lys-32 participates in a covalent cross-link: Glycyl lysine isopeptide (Lys-Gly) (interchain with G-Cter in SUMO). The residue at position 73 (Ser-73) is a Phosphoserine. A Glycyl lysine isopeptide (Lys-Gly) (interchain with G-Cter in SUMO) cross-link involves residue Lys-83. Positions 120 to 202 (HLIQDISTTC…AQLQVWKTGT (83 aa)) constitute a PNT domain. A disordered region spans residues 275-302 (QGTVLPSPSNSDTSSNGSSQDMNDDDID). The segment covering 280–293 (PSPSNSDTSSNGSS) has biased composition (low complexity). Residues 349–432 (VHLWQFIREL…KKQRLVYKFL (84 aa)) constitute a DNA-binding region (ETS).

It belongs to the ETS family. In terms of assembly, may interact with cebp-1. May interact with tdpt-1 to facilitate its sumoylation. In terms of processing, phosphorylation is required for axon regeneration. Sumoylated; sumoylation inhibits phosphorylation, which is required for probable interaction with cebp-1 and consequently the expression of svh-2. As to expression, expressed in cells of the anterior and posterior bulbs of the pharynx, seam cells, a few unidentified cells of the vulva, the hypodermis, several unidentified neurons, labial socket cells of the head and rectal cells.

It localises to the nucleus. Functionally, transcription factor which binds to 5'-GGAA/T-3' DNA consensus sequences. Both positively and negatively regulates the expression of target genes. Plays a role in the regulation of adult lifespan, which may in part be through modulation of daf-16 activity. Regulates the expression of genes such as svh-2 in response to axon injury and in addition, may function downstream of the cAMP signaling pathway to promote axon regeneration. Regulates the expression of lipid metabolism genes and may also control the expression of the RNA-binding protein rege-1 which too has been implicated in the control of fat accumulation. The chain is Transcription factor ets-4 from Caenorhabditis elegans.